A 190-amino-acid polypeptide reads, in one-letter code: Glutamyl-tRNA(Gln) amidotransferase subunit F, mitochondrial (190 aa).

Belongs to the GatF family. Subunit of the heterotrimeric GatFAB amidotransferase (AdT) complex, composed of A, B and F subunits.

The protein localises to the mitochondrion inner membrane. The enzyme catalyses L-glutamyl-tRNA(Gln) + L-glutamine + ATP + H2O = L-glutaminyl-tRNA(Gln) + L-glutamate + ADP + phosphate + H(+). Functionally, allows the formation of correctly charged Gln-tRNA(Gln) through the transamidation of misacylated Glu-tRNA(Gln) in the mitochondria. The reaction takes place in the presence of glutamine and ATP through an activated gamma-phospho-Glu-tRNA(Gln). Required for proper protein synthesis within the mitochondrion. In Eremothecium gossypii (strain ATCC 10895 / CBS 109.51 / FGSC 9923 / NRRL Y-1056) (Yeast), this protein is Glutamyl-tRNA(Gln) amidotransferase subunit F, mitochondrial.